The following is a 444-amino-acid chain: Chitinase-like protein Idgf5 (444 aa).

The first 26 residues, 1 to 26 (MMWIQKNPFLGLLLCSFLAFFQSTYA), serve as a signal peptide directing secretion. Residues 29–444 (GKLVCFYDAQ…PILRSIKFKL (416 aa)) form the GH18 domain. C33 and C60 are oxidised to a cystine. Residues N289 and N311 are each glycosylated (N-linked (GlcNAc...) asparagine). A disulfide bond links C349 and C429.

The protein belongs to the glycosyl hydrolase 18 family. IDGF subfamily. In terms of processing, glycosylated.

It is found in the secreted. Its function is as follows. Probably required to stimulate the proliferation, polarization and motility of imaginal disk cells. May act by stabilizing the binding of insulin-like peptides to its receptor through a simultaneous interaction with both molecules to form a multiprotein signaling complex. This Drosophila melanogaster (Fruit fly) protein is Chitinase-like protein Idgf5 (Idgf5).